A 177-amino-acid chain; its full sequence is Large ribosomal subunit protein uL10 (177 aa).

Belongs to the universal ribosomal protein uL10 family. In terms of assembly, part of the ribosomal stalk of the 50S ribosomal subunit. The N-terminus interacts with L11 and the large rRNA to form the base of the stalk. The C-terminus forms an elongated spine to which L12 dimers bind in a sequential fashion forming a multimeric L10(L12)X complex.

Forms part of the ribosomal stalk, playing a central role in the interaction of the ribosome with GTP-bound translation factors. The chain is Large ribosomal subunit protein uL10 from Thermoanaerobacter pseudethanolicus (strain ATCC 33223 / 39E) (Clostridium thermohydrosulfuricum).